The primary structure comprises 212 residues: Probable GTP-binding protein EngB (212 aa).

The region spanning 38–210 (SLPEIAFVGK…KASLAKCIKP (173 aa)) is the EngB-type G domain. Residues 46–53 (GKSNVGKS), 73–77 (GRTRQ), 91–94 (DLPG), 158–161 (TKSD), and 189–191 (VSN) contribute to the GTP site. 2 residues coordinate Mg(2+): Ser-53 and Thr-75.

This sequence belongs to the TRAFAC class TrmE-Era-EngA-EngB-Septin-like GTPase superfamily. EngB GTPase family. Mg(2+) serves as cofactor.

Its function is as follows. Necessary for normal cell division and for the maintenance of normal septation. In Rickettsia africae (strain ESF-5), this protein is Probable GTP-binding protein EngB.